The sequence spans 509 residues: Pancreatic secretory granule membrane major glycoprotein GP2 (509 aa).

Residues 1–21 form the signal peptide; it reads MVGSYVLWLALASCILTLASP. A D10C region spans residues 36 to 56; sequence DPCQNYTLLDEPSRSTENTEG. Disulfide bonds link Cys-38-Cys-132, Cys-60-Cys-147, Cys-82-Cys-120, Cys-88-Cys-152, Cys-113-Cys-121, Cys-162-Cys-172, Cys-166-Cys-181, Cys-183-Cys-213, Cys-201-Cys-292, and Cys-233-Cys-256. Asn-40, Asn-97, and Asn-109 each carry an N-linked (GlcNAc...) asparagine glycan. The EGF-like domain maps to 158-202; that stretch reads ATDKCKNLCRPEEACSFLNGTWDCFCRSDLNSSDVHSLQPRLNCG. N-linked (GlcNAc...) asparagine glycosylation is found at Asn-176, Asn-188, and Asn-232. The tract at residues 200-293 is ZP-N; sequence NCGAKEIQVS…TILNINFQCA (94 aa). The ZP domain occupies 200 to 456; the sequence is NCGAKEIQVS…PCCSRSQQRS (257 aa). 2 N-linked (GlcNAc...) asparagine glycosylation sites follow: Asn-263 and Asn-314. Residues 294–317 form a flexible ZP-N/ZP-C linker region; the sequence is YPLDMKVSLQTALHPIVSSLNISV. The tract at residues 318 to 329 is internal hydrophobic patch (IHP); that stretch reads DGEGEFTVRMAL. The interval 318–456 is ZP-C; it reads DGEGEFTVRM…PCCSRSQQRS (139 aa). 3 disulfide bridges follow: Cys-373/Cys-433, Cys-394/Cys-449, and Cys-438/Cys-445. Residues 463 to 471 form an external hydrophobic patch (EHP) region; sequence PARVLDLGP. Residue Asp-484 is the site of GPI-anchor amidated aspartate attachment. The propeptide at 485-509 is removed in mature form; the sequence is GTPSTAGFLLAWPMLLLPILLAELF.

In terms of assembly, interacts with SYCN. Interacts with bacterial adhesin fimH. Post-translationally, N-glycosylated. Expressed in pancreas.

The protein localises to the zymogen granule membrane. The protein resides in the secreted. Its subcellular location is the cell membrane. It is found in the apical cell membrane. It localises to the membrane raft. The protein localises to the endosome. In terms of biological role, functions as an intestinal M-cell transcytotic receptor specific of type-I-piliated bacteria that participates in the mucosal immune response toward these bacteria. At the apical membrane of M-cells it binds fimH, a protein of the bacteria type I pilus tip. Internalizes bound bacteria, like E.coli and S.typhimurium, from the lumen of the intestine and delivers them, through M-cells, to the underlying organized lymphoid follicles where they are captured by antigen-presenting dendritic cells to elicit a mucosal immune response. The chain is Pancreatic secretory granule membrane major glycoprotein GP2 from Canis lupus familiaris (Dog).